We begin with the raw amino-acid sequence, 117 residues long: Large ribosomal subunit protein uL18 (117 aa).

Belongs to the universal ribosomal protein uL18 family. As to quaternary structure, part of the 50S ribosomal subunit; part of the 5S rRNA/L5/L18/L25 subcomplex. Contacts the 5S and 23S rRNAs.

This is one of the proteins that bind and probably mediate the attachment of the 5S RNA into the large ribosomal subunit, where it forms part of the central protuberance. The sequence is that of Large ribosomal subunit protein uL18 from Sphingopyxis alaskensis (strain DSM 13593 / LMG 18877 / RB2256) (Sphingomonas alaskensis).